The following is a 176-amino-acid chain: Ribosome maturation factor RimM (176 aa).

A PRC barrel domain is found at 97–176 (EDEFYWRDLI…QIIVDWDPDF (80 aa)).

This sequence belongs to the RimM family. Binds ribosomal protein uS19.

It is found in the cytoplasm. Functionally, an accessory protein needed during the final step in the assembly of 30S ribosomal subunit, possibly for assembly of the head region. Essential for efficient processing of 16S rRNA. May be needed both before and after RbfA during the maturation of 16S rRNA. It has affinity for free ribosomal 30S subunits but not for 70S ribosomes. This Shewanella amazonensis (strain ATCC BAA-1098 / SB2B) protein is Ribosome maturation factor RimM.